Consider the following 198-residue polypeptide: Recombination protein RecR (198 aa).

The C4-type zinc-finger motif lies at 57-72 (CSECGHITEQDPCYIC). Residues 80-175 (SVICVVEDDK…TVTRLAQGLS (96 aa)) enclose the Toprim domain.

Belongs to the RecR family.

May play a role in DNA repair. It seems to be involved in an RecBC-independent recombinational process of DNA repair. It may act with RecF and RecO. This is Recombination protein RecR from Staphylococcus saprophyticus subsp. saprophyticus (strain ATCC 15305 / DSM 20229 / NCIMB 8711 / NCTC 7292 / S-41).